The following is a 665-amino-acid chain: T-cell differentiation antigen CD6 (665 aa).

Positions 1-16 are cleaved as a signal peptide; sequence MWLFLGIAGLLTAVLS. The Extracellular segment spans residues 17–398; the sequence is GLPSPAPSGQ…VKDKDSQGLT (382 aa). N-linked (GlcNAc...) asparagine glycans are attached at residues asparagine 29, asparagine 34, and asparagine 49. 3 SRCR domains span residues 45–155, 160–259, and 264–360; these read IRLV…VTCA, VRLV…VVCS, and WRLT…VVCS. Cystine bridges form between cysteine 54-cysteine 87, cysteine 69-cysteine 143, cysteine 82-cysteine 154, cysteine 128-cysteine 136, cysteine 169-cysteine 203, cysteine 185-cysteine 248, cysteine 198-cysteine 258, cysteine 229-cysteine 239, cysteine 289-cysteine 349, cysteine 302-cysteine 359, and cysteine 329-cysteine 339. N-linked (GlcNAc...) asparagine glycosylation is found at asparagine 111 and asparagine 117. Asparagine 228 carries an N-linked (GlcNAc...) asparagine glycan. N-linked (GlcNAc...) asparagine glycosylation is found at asparagine 344 and asparagine 367. Residues 399-419 form a helical membrane-spanning segment; it reads LLILCIVLGILLLVSTIFIVI. At 420-665 the chain is on the cytoplasmic side; the sequence is LLLRAKGQYA…EEDYDDIGAA (246 aa). The interval 536 to 665 is disordered; the sequence is ADPRPCVADV…EEDYDDIGAA (130 aa). Polar residues-rich tracts occupy residues 548 to 565 and 580 to 595; these read RGSQ…TSSE and NSQA…TEQP. A compositionally biased stretch (low complexity) spans 608 to 621; it reads SGPSADDSSSTSSG. Residues 651–665 are compositionally biased toward acidic residues; it reads SIDDDEEDYDDIGAA. The residue at position 659 (tyrosine 659) is a Phosphotyrosine.

Interacts (via extracellular domain) with ALCAM/CD166 (via extracellular domain). Interacts with the TCR/CD3 complex subunit CD3E. Interacts (via tyrosine phosphorylated C-terminus) with LCP2 (via SH2 domain). Interacts (via glycosylated extracellular domain) with LGALS1 and LGALS3. Interaction with LGALS1 or LGALS3 inhibits interaction with ALCAM. Interacts with VAV1. Post-translationally, after T-cell activation, becomes hyperphosphorylated on Ser and Thr residues. Phosphorylated on tyrosine residues in response to stimulation of the TCR complex. Glycosylated. In terms of tissue distribution, expressed predominantly in thymus, lymph node and spleen.

The protein localises to the cell membrane. Its function is as follows. Cell adhesion molecule that mediates cell-cell contacts and regulates T-cell responses via its interaction with ALCAM/CD166. Contributes to signaling cascades triggered by activation of the TCR/CD3 complex. Functions as a costimulatory molecule; promotes T-cell activation and proliferation. Contributes to the formation and maturation of the immunological synapse. Functions as a calcium-dependent pattern receptor that binds and aggregates both Gram-positive and Gram-negative bacteria. Binds both lipopolysaccharide (LPS) from Gram-negative bacteria and lipoteichoic acid from Gram-positive bacteria. LPS binding leads to the activation of signaling cascades and down-stream MAP kinases. Mediates activation of the inflammatory response and the secretion of pro-inflammatory cytokines in response to LPS. In Mus musculus (Mouse), this protein is T-cell differentiation antigen CD6 (Cd6).